The chain runs to 192 residues: MEYRSLTLDDFLSRFQLLRPQINRETLNHRQAAVLIPIVRRPQPGLLLTQRSIHLRKHAGQVAFPGGAVDDTDASVIAAALREAEEEVAIPPSAVEVIGVLPPVDSVTGYQVTPVVGIIPPDLPYRASEDEVSAVFEMPLAQALHLGRYHPLDIYRRGDSHRVWLSWYEQYFVWGMTAGIIRELALQIGVKP.

Residues 29 to 160 (HRQAAVLIPI…PLDIYRRGDS (132 aa)) form the Nudix hydrolase domain. Residues 67-89 (GAVDDTDASVIAAALREAEEEVA) carry the Nudix box motif. 2 residues coordinate Mg(2+): E83 and E87.

Belongs to the Nudix hydrolase family. PCD1 subfamily. Mn(2+) is required as a cofactor. Mg(2+) serves as cofactor.

Its function is as follows. Probably mediates the hydrolysis of some nucleoside diphosphate derivatives. This is an uncharacterized protein from Escherichia coli (strain SE11).